The following is a 164-amino-acid chain: Cyanate hydratase (164 aa).

Residues R104, E107, and S130 contribute to the active site.

The protein belongs to the cyanase family.

The enzyme catalyses cyanate + hydrogencarbonate + 3 H(+) = NH4(+) + 2 CO2. Catalyzes the reaction of cyanate with bicarbonate to produce ammonia and carbon dioxide. This chain is Cyanate hydratase, found in Botryotinia fuckeliana (strain B05.10) (Noble rot fungus).